A 150-amino-acid chain; its full sequence is Meiotically up-regulated gene 108 protein (150 aa).

A compositionally biased stretch (polar residues) spans 1–11; the sequence is MANRFTSSDQT. The tract at residues 1-150 is disordered; sequence MANRFTSSDQ…RDISLLGSTI (150 aa). Residues 12 to 23 are compositionally biased toward basic and acidic residues; that stretch reads QETHGHHVDKHS. The segment covering 83–93 has biased composition (polar residues); the sequence is NRSSQHTGRVN.

The protein localises to the cytoplasm. Its subcellular location is the nucleus. In terms of biological role, has a role in meiosis. In Schizosaccharomyces pombe (strain 972 / ATCC 24843) (Fission yeast), this protein is Meiotically up-regulated gene 108 protein (mug108).